Reading from the N-terminus, the 199-residue chain is Dephospho-CoA kinase (199 aa).

A DPCK domain is found at 2–199; the sequence is KIAVTGGYSS…FVADRIEKKK (198 aa). 10–15 contributes to the ATP binding site; that stretch reads SSGKSS.

The protein belongs to the CoaE family.

Its subcellular location is the cytoplasm. It carries out the reaction 3'-dephospho-CoA + ATP = ADP + CoA + H(+). It functions in the pathway cofactor biosynthesis; coenzyme A biosynthesis; CoA from (R)-pantothenate: step 5/5. Functionally, catalyzes the phosphorylation of the 3'-hydroxyl group of dephosphocoenzyme A to form coenzyme A. The protein is Dephospho-CoA kinase of Desulfotalea psychrophila (strain LSv54 / DSM 12343).